The primary structure comprises 602 residues: DEAD-box ATP-dependent RNA helicase 52A (602 aa).

Positions 9–31 (KSVEAGGEPGGGGGGAWSTVSRS) are disordered. The span at 15 to 24 (GEPGGGGGGA) shows a compositional bias: gly residues. The Q motif motif lies at 84 to 112 (DGFEAAGLVEAVLRNVARCGYESPTPVQR). The Helicase ATP-binding domain occupies 115–305 (MPIALAGRDL…SDFLSNYIFI (191 aa)). Residue 128–135 (AQTGSGKT) coordinates ATP. Positions 249–252 (DEAD) match the DEAD box motif. The Helicase C-terminal domain occupies 328-485 (EKRGYLLDLL…DVPDWLVQYA (158 aa)). Disordered stretches follow at residues 492-521 (GSSY…SGGG) and 552-602 (RGGG…SGWD). A compositionally biased stretch (gly residues) spans 552 to 574 (RGGGYSRGGRGGYSGGGGGGGGD).

The protein belongs to the DEAD box helicase family. DDX3/DED1 subfamily.

The enzyme catalyses ATP + H2O = ADP + phosphate + H(+). This chain is DEAD-box ATP-dependent RNA helicase 52A, found in Oryza sativa subsp. japonica (Rice).